A 382-amino-acid polypeptide reads, in one-letter code: Carbamoyl phosphate synthase small chain (382 aa).

Residues 1–187 (MPTPALLVLA…EFRPQTATEE (187 aa)) are CPSase. The L-glutamine site is built by serine 47, glycine 239, and glycine 241. One can recognise a Glutamine amidotransferase type-1 domain in the interval 191-377 (TVVAIDFGVK…VAQMRAYRQQ (187 aa)). Residue cysteine 267 is the Nucleophile of the active site. L-glutamine contacts are provided by leucine 268, glutamine 271, asparagine 307, glycine 309, and phenylalanine 310. Active-site residues include histidine 350 and glutamate 352.

Belongs to the CarA family. As to quaternary structure, composed of two chains; the small (or glutamine) chain promotes the hydrolysis of glutamine to ammonia, which is used by the large (or ammonia) chain to synthesize carbamoyl phosphate. Tetramer of heterodimers (alpha,beta)4.

It carries out the reaction hydrogencarbonate + L-glutamine + 2 ATP + H2O = carbamoyl phosphate + L-glutamate + 2 ADP + phosphate + 2 H(+). The enzyme catalyses L-glutamine + H2O = L-glutamate + NH4(+). It participates in amino-acid biosynthesis; L-arginine biosynthesis; carbamoyl phosphate from bicarbonate: step 1/1. The protein operates within pyrimidine metabolism; UMP biosynthesis via de novo pathway; (S)-dihydroorotate from bicarbonate: step 1/3. Functionally, small subunit of the glutamine-dependent carbamoyl phosphate synthetase (CPSase). CPSase catalyzes the formation of carbamoyl phosphate from the ammonia moiety of glutamine, carbonate, and phosphate donated by ATP, constituting the first step of 2 biosynthetic pathways, one leading to arginine and/or urea and the other to pyrimidine nucleotides. The small subunit (glutamine amidotransferase) binds and cleaves glutamine to supply the large subunit with the substrate ammonia. The protein is Carbamoyl phosphate synthase small chain of Thermosynechococcus vestitus (strain NIES-2133 / IAM M-273 / BP-1).